Here is a 428-residue protein sequence, read N- to C-terminus: Enolase (428 aa).

A (2R)-2-phosphoglycerate-binding site is contributed by Gln-163. Glu-205 (proton donor) is an active-site residue. Mg(2+) is bound by residues Asp-242, Glu-286, and Asp-313. Residues Lys-338, Arg-367, Ser-368, and Lys-389 each contribute to the (2R)-2-phosphoglycerate site. The active-site Proton acceptor is Lys-338.

The protein belongs to the enolase family. Requires Mg(2+) as cofactor.

It is found in the cytoplasm. Its subcellular location is the secreted. It localises to the cell surface. It catalyses the reaction (2R)-2-phosphoglycerate = phosphoenolpyruvate + H2O. It functions in the pathway carbohydrate degradation; glycolysis; pyruvate from D-glyceraldehyde 3-phosphate: step 4/5. In terms of biological role, catalyzes the reversible conversion of 2-phosphoglycerate (2-PG) into phosphoenolpyruvate (PEP). It is essential for the degradation of carbohydrates via glycolysis. The sequence is that of Enolase from Acidovorax sp. (strain JS42).